The primary structure comprises 522 residues: Probable poly(ADP-ribose) glycohydrolase 2 (522 aa).

The protein belongs to the poly(ADP-ribose) glycohydrolase family.

The enzyme catalyses [(1''-&gt;2')-ADP-alpha-D-ribose](n) + H2O = [(1''-&gt;2')-ADP-alpha-D-ribose](n-1) + ADP-D-ribose. In terms of biological role, poly(ADP-ribose) synthesized after DNA damage is only present transiently and is rapidly degraded by poly(ADP-ribose) glycohydrolase. The protein is Probable poly(ADP-ribose) glycohydrolase 2 (PARG2) of Arabidopsis thaliana (Mouse-ear cress).